We begin with the raw amino-acid sequence, 339 residues long: MSVEALLLLSFGGPEGPEQVMPFLENVTRGRGIPRERLESVAEHYLHFGGVSPINGINRDLIVAIEAELARRGMQMPVYFGNRNWEPYVEDTVAAMRDNGIRRAAVFSTSAWGGYSGCAQYQEDIARGRAAAGPEAPELVKLRQYFDHPLLIEMFADAIRDAAATLPEDLRAQARLVFTAHSIPVRAANRCGPDLYERQVAHTSALVAAAAGYPEYDQVWQSRSGPPQVPWLEPDVGDHLEVLAARGVNAVIVCPVGFVADHIEVVWDLDNELAEQAAEAGIALARASTPNAQPRFAKLVVDLIDELRLGLPPQRVGGGLVPGYGSSVNGALCTPDCSG.

Residues Ser52 and Tyr121 each contribute to the Fe-coproporphyrin III site. Fe(2+) is bound by residues His181 and Glu264.

This sequence belongs to the ferrochelatase family.

It localises to the cytoplasm. It catalyses the reaction Fe-coproporphyrin III + 2 H(+) = coproporphyrin III + Fe(2+). It functions in the pathway porphyrin-containing compound metabolism; protoheme biosynthesis. Its function is as follows. Involved in coproporphyrin-dependent heme b biosynthesis. Catalyzes the insertion of ferrous iron into coproporphyrin III to form Fe-coproporphyrin III. The polypeptide is Coproporphyrin III ferrochelatase (Mycolicibacterium vanbaalenii (strain DSM 7251 / JCM 13017 / BCRC 16820 / KCTC 9966 / NRRL B-24157 / PYR-1) (Mycobacterium vanbaalenii)).